The primary structure comprises 566 residues: MDNSHDSDSVFLYHIPCDNCGSSDGNSLFSDGHTFCYVCEKWTAGNEDTKERASKRKPSGGKPMTYNVWNFGESNGRYSALTARGISKETCQKAGYWIAKVDGVMYQVADYRDQNGNIVSQKVRDKDKNFKTTGSHKSDALFGKHLWNGGKKIVVTEGEIDMLTVMELQDCKYPVVSLGHGASAAKKTCAANYEYFDQFEQIILMFDMDEAGRKAVEEAAQVLPAGKVRVAVLPCKDANECHLNGHDREIMEQVWNAGPWIPDGVVSALSLRERIREHLSSEESVGLLFSGCTGINDKTLGARGGEVIMVTSGSGMGKSTFVRQQALQWGTAMGKKVGLAMLEESVEETAEDLIGLHNRVRLRQSDSLKREIIENGKFDQWFDELFGNDTFHLYDSFAEAETDRLLAKLAYMRSGLGCDVIILDHISIVVSASGESDERKMIDNLMTKLKGFAKSTGVVLVVICHLKNPDKGKAHEEGRPVSITDLRGSGALRQLSDTIIALERNQQGDMPNLVLVRILKCRFTGDTGIAGYMEYNKETGWLEPSSYSGEEESHSESTDWSNDTDF.

Zn(2+) is bound by residues C17, C20, C36, and C39. Residues 17–39 (CDNCGSSDGNSLFSDGHTFCYVC) form a C4-like; zinc ribbon fold zinc finger. One can recognise a Toprim domain in the interval 151-238 (KKIVVTEGEI…RVAVLPCKDA (88 aa)). Mg(2+)-binding residues include E157, D207, and D237. In terms of domain architecture, SF4 helicase spans 281–548 (SEESVGLLFS…TGWLEPSSYS (268 aa)). Position 312 to 319 (312 to 319 (SGSGMGKS)) interacts with ATP. Residues 543 to 566 (EPSSYSGEEESHSESTDWSNDTDF) are disordered. Residues 550-566 (EEESHSESTDWSNDTDF) are binding to viral DNA polymerase.

The protein belongs to the Teseptimavirus DNA helicase/primase family. As to quaternary structure, homohexamer. Assembles as a hexamer onto linear or circular ssDNA in the presence of ATP or dTTP. Present in a mixture of heptamers and hexamers in the absence of DNA. Interacts (via C-terminus) with the viral DNA polymerase that is bound to DNA; this interaction is essential to initiate leading-strand DNA synthesis. The priming complex consists of 2 DNA polymerases and 1 helicase-primase hexamer that assemble on the DNA template. Interacts with the single-stranded DNA-binding protein. Part of the replicase complex that includes the DNA polymerase, thioredoxin, the primase/helicase and the single-stranded DNA binding protein. Requires Mg(2+) as cofactor.

It catalyses the reaction ATP + H2O = ADP + phosphate + H(+). ATP-dependent DNA helicase and primase essential for viral DNA replication and recombination. The helicase moves 5' -&gt; 3' on the lagging strand template, unwinding the DNA duplex ahead of the leading strand polymerase at the replication fork and generating ssDNA for both leading and lagging strand synthesis. ATP or dTTP hydrolysis propels each helicase domain to translocate 2 nt per step sequentially along DNA. Mediates strand transfer when a joint molecule is available and participates in recombinational DNA repair through its role in strand exchange. Primase activity synthesizes short RNA primers at the sequence 5'-GTC-3' on the lagging strand that the polymerase elongates using dNTPs and providing the primase is still present. This Escherichia phage T7 (Bacteriophage T7) protein is DNA helicase/primase.